We begin with the raw amino-acid sequence, 99 residues long: Probable non-specific lipid-transfer protein AKCS9 (99 aa).

A signal peptide spans 1–33; the sequence is MTMKMKMKMSVVCAVVVVALFLIDVGPVAEAVT. Intrachain disulfides connect cysteine 34–cysteine 68, cysteine 42–cysteine 56, cysteine 57–cysteine 92, and cysteine 66–cysteine 99.

It belongs to the plant LTP family. As to expression, expressed in most tissues except nodules.

Functionally, potential lipid transfer protein. In Vigna unguiculata (Cowpea), this protein is Probable non-specific lipid-transfer protein AKCS9.